The primary structure comprises 437 residues: Phosphoglucosamine mutase (437 aa).

The active-site Phosphoserine intermediate is S93. Mg(2+) is bound by residues S93, D230, D232, and D234. A Phosphoserine modification is found at S93.

The protein belongs to the phosphohexose mutase family. The cofactor is Mg(2+). Activated by phosphorylation.

The catalysed reaction is alpha-D-glucosamine 1-phosphate = D-glucosamine 6-phosphate. Its function is as follows. Catalyzes the conversion of glucosamine-6-phosphate to glucosamine-1-phosphate. The sequence is that of Phosphoglucosamine mutase from Clavibacter michiganensis subsp. michiganensis (strain NCPPB 382).